We begin with the raw amino-acid sequence, 67 residues long: MAILRTSEIRTMTIEERADELENLNNELVRERALTSAGGAPENPGRIGEIRRTIARIKTIQHELNEI.

It belongs to the universal ribosomal protein uL29 family.

The protein is Large ribosomal subunit protein uL29 of Methanosarcina acetivorans (strain ATCC 35395 / DSM 2834 / JCM 12185 / C2A).